A 302-amino-acid polypeptide reads, in one-letter code: Probable alpha-L-glutamate ligase (302 aa).

One can recognise an ATP-grasp domain in the interval 112 to 294; it reads LQLLLKAGIP…IAAEIIDYIE (183 aa). ATP contacts are provided by residues K148, 185-186, D194, and 218-220; these read DF and RAN. Residues D255, E267, and N269 each coordinate Mg(2+). Mn(2+) contacts are provided by D255, E267, and N269.

This sequence belongs to the RimK family. The cofactor is Mg(2+). Requires Mn(2+) as cofactor.

The polypeptide is Probable alpha-L-glutamate ligase (Haemophilus influenzae (strain ATCC 51907 / DSM 11121 / KW20 / Rd)).